Consider the following 132-residue polypeptide: CLAVATA3/ESR (CLE)-related protein ESR2 (132 aa).

A signal peptide spans 1-26; it reads MASRMGMVAIVSLFVCALVASTSVNA. Positions 68–132 are disordered; it reads NRASKQLDSE…IGPPPFLDRY (65 aa). Hydroxyproline is present on residues P82 and P85. P85 is a glycosylation site (O-linked (Ara...) hydroxyproline). Residues 123-132 are compositionally biased toward pro residues; sequence IGPPPFLDRY.

This sequence belongs to the CLV3/ESR signal peptide family. The O-glycosylation (arabinosylation) of the hydroxyproline Pro-85 enhances binding affinity of the ESR2p peptide for its receptor. As to expression, seed endosperm.

It localises to the secreted. The protein localises to the extracellular space. Extracellular signal peptide that regulates cell fate. The chain is CLAVATA3/ESR (CLE)-related protein ESR2 from Zea mays (Maize).